A 276-amino-acid polypeptide reads, in one-letter code: 2,3,4,5-tetrahydropyridine-2,6-dicarboxylate N-succinyltransferase (276 aa).

Arg-108 and Asp-145 together coordinate substrate.

Belongs to the transferase hexapeptide repeat family. Homotrimer.

Its subcellular location is the cytoplasm. The catalysed reaction is (S)-2,3,4,5-tetrahydrodipicolinate + succinyl-CoA + H2O = (S)-2-succinylamino-6-oxoheptanedioate + CoA. It functions in the pathway amino-acid biosynthesis; L-lysine biosynthesis via DAP pathway; LL-2,6-diaminopimelate from (S)-tetrahydrodipicolinate (succinylase route): step 1/3. This is 2,3,4,5-tetrahydropyridine-2,6-dicarboxylate N-succinyltransferase from Caulobacter vibrioides (strain ATCC 19089 / CIP 103742 / CB 15) (Caulobacter crescentus).